Here is a 289-residue protein sequence, read N- to C-terminus: Acetyl-coenzyme A carboxylase carboxyl transferase subunit beta (289 aa).

Residues 24–289 form the CoA carboxyltransferase N-terminal domain; it reads LWTNCESCGQ…RQKTVSDAAA (266 aa). Residues Cys28, Cys31, Cys47, and Cys50 each contribute to the Zn(2+) site. The C4-type zinc-finger motif lies at 28–50; sequence CESCGQMMLTKELERSEKVCPHC.

The protein belongs to the AccD/PCCB family. As to quaternary structure, acetyl-CoA carboxylase is a heterohexamer composed of biotin carboxyl carrier protein (AccB), biotin carboxylase (AccC) and two subunits each of ACCase subunit alpha (AccA) and ACCase subunit beta (AccD). Zn(2+) serves as cofactor.

The protein resides in the cytoplasm. The catalysed reaction is N(6)-carboxybiotinyl-L-lysyl-[protein] + acetyl-CoA = N(6)-biotinyl-L-lysyl-[protein] + malonyl-CoA. It participates in lipid metabolism; malonyl-CoA biosynthesis; malonyl-CoA from acetyl-CoA: step 1/1. Component of the acetyl coenzyme A carboxylase (ACC) complex. Biotin carboxylase (BC) catalyzes the carboxylation of biotin on its carrier protein (BCCP) and then the CO(2) group is transferred by the transcarboxylase to acetyl-CoA to form malonyl-CoA. The chain is Acetyl-coenzyme A carboxylase carboxyl transferase subunit beta from Gluconobacter oxydans (strain 621H) (Gluconobacter suboxydans).